An 87-amino-acid chain; its full sequence is uncharacterized protein (87 aa).

A helical transmembrane segment spans residues 29–49 (ILWMIIFVVIIAVIIYILISP).

It is found in the membrane. This is an uncharacterized protein from Methanocaldococcus jannaschii (strain ATCC 43067 / DSM 2661 / JAL-1 / JCM 10045 / NBRC 100440) (Methanococcus jannaschii).